Reading from the N-terminus, the 406-residue chain is Arginine deiminase (406 aa).

Cys-396 (amidino-cysteine intermediate) is an active-site residue.

Belongs to the arginine deiminase family.

It is found in the cytoplasm. It catalyses the reaction L-arginine + H2O = L-citrulline + NH4(+). The protein operates within amino-acid degradation; L-arginine degradation via ADI pathway; carbamoyl phosphate from L-arginine: step 1/2. The chain is Arginine deiminase from Vibrio vulnificus (strain CMCP6).